The primary structure comprises 128 residues: S-protein homolog 5 (128 aa).

The first 20 residues, 1-20, serve as a signal peptide directing secretion; it reads MEKVSIVCFFFFLLFGSGYG.

This sequence belongs to the plant self-incompatibility (S1) protein family.

The protein resides in the secreted. The sequence is that of S-protein homolog 5 from Arabidopsis thaliana (Mouse-ear cress).